The primary structure comprises 510 residues: NADP-dependent fatty aldehyde dehydrogenase (510 aa).

Residue 229–234 (GSVGGG) coordinates NADP(+). Active-site residues include Glu253 and Cys289.

It belongs to the aldehyde dehydrogenase family. In terms of assembly, homodimer.

It carries out the reaction an aldehyde + NADP(+) + H2O = a carboxylate + NADPH + 2 H(+). Catalyzes the oxidation of long-chain aliphatic aldehydes to acids. May be implicated in controlling luminescence as it catalyzes the oxidation of the fatty aldehyde substrate for the light-emitting reaction. The sequence is that of NADP-dependent fatty aldehyde dehydrogenase (aldH) from Vibrio harveyi (Beneckea harveyi).